Reading from the N-terminus, the 454-residue chain is Butyrophilin-like protein 2 (454 aa).

At 1 to 6 (MVDCPR) the chain is on the cytoplasmic side. A helical; Signal-anchor for type II membrane protein membrane pass occupies residues 7-23 (YSLSGVAASFLFVLLTI). The Extracellular portion of the chain corresponds to 24 to 454 (KHPDDFRVVG…KTARFPLSGW (431 aa)). Ig-like V-type domains lie at 27 to 140 (DDFR…VLLQ), 148 to 234 (PNIH…ATIA), 244 to 355 (ASVS…ARVD), and 365 to 452 (PRIT…FPLS). Disulfide bonds link Cys-50–Cys-124, Cys-164–Cys-218, Cys-267–Cys-341, and Cys-381–Cys-435. 4 N-linked (GlcNAc...) asparagine glycosylation sites follow: Asn-210, Asn-296, Asn-427, and Asn-432.

Belongs to the immunoglobulin superfamily. BTN/MOG family. As to expression, highly expressed in intestine and at reduced levels in lung and stomach. Also expressed in thymus, spleen, lymph nodes, T-cells, B-cells, and macrophages.

Its subcellular location is the membrane. Functionally, negative regulator of T-cell proliferation. The chain is Butyrophilin-like protein 2 from Mus musculus (Mouse).